A 114-amino-acid polypeptide reads, in one-letter code: Early 4 ORF4 protein (114 aa).

The short motif at 66 to 75 (RAKRRDRRRR) is the Nuclear localization signal element.

Belongs to the adenoviridae E4 ORF4 family. As to quaternary structure, interacts with host BAZ1A/ACF1, host PPP2R2A/PP2a-B55alpha subunit, and host PPP2R5E/PP2a-B'B56 subunit. May interact with host SRC. May be phosphorylated by host SRC kinase.

Its subcellular location is the host nucleus. It is found in the host cytoplasm. Its function is as follows. Plays a role in viral alternative pre-mRNA splicing. Activates dephosphorylation by protein phosphatase 2A of host SR proteins and converts their splicing properties. When expressed alone ex vivo, induces p53/TP53-independent apoptosis called cytoplasmic death. May mimic nutrient/growth signals to activate the host mTOR pathway. The protein is Early 4 ORF4 protein of Homo sapiens (Human).